We begin with the raw amino-acid sequence, 186 residues long: Large ribosomal subunit protein uL5 (186 aa).

It belongs to the universal ribosomal protein uL5 family. In terms of assembly, part of the 50S ribosomal subunit; part of the 5S rRNA/L5/L18/L25 subcomplex. Contacts the 5S rRNA and the P site tRNA. Forms a bridge to the 30S subunit in the 70S ribosome.

Functionally, this is one of the proteins that bind and probably mediate the attachment of the 5S RNA into the large ribosomal subunit, where it forms part of the central protuberance. In the 70S ribosome it contacts protein S13 of the 30S subunit (bridge B1b), connecting the 2 subunits; this bridge is implicated in subunit movement. Contacts the P site tRNA; the 5S rRNA and some of its associated proteins might help stabilize positioning of ribosome-bound tRNAs. The protein is Large ribosomal subunit protein uL5 of Karelsulcia muelleri (strain GWSS) (Sulcia muelleri).